Consider the following 918-residue polypeptide: Band 3 anion exchange protein (918 aa).

The tract at residues 1 to 48 is disordered; it reads MENDLSFGEDVMSYEEESDSAFPSPIRPTPPGHSGNYDLEQSRQEEDS. Over 1–392 the chain is Cytoplasmic; the sequence is MENDLSFGED…ISDFTDALDP (392 aa). A helical membrane pass occupies residues 393–416; the sequence is QVLAAVIFIYFAALSPAITFGGLL. Topologically, residues 417 to 424 are extracellular; the sequence is ADKTEHMM. Residues 425 to 445 traverse the membrane as a helical segment; the sequence is GVSELMISTCVQGIIFAFIAA. Over 446-448 the chain is Cytoplasmic; sequence QPT. A discontinuously helical transmembrane segment spans residues 449-465; that stretch reads LVIGFSGPLLVFEEAFF. The Extracellular portion of the chain corresponds to 466 to 474; it reads AFCKSQEIE. The chain crosses the membrane as a helical span at residues 475 to 495; sequence YIVGRIWVGLWLVIIVVVIVA. Over 496–507 the chain is Cytoplasmic; that stretch reads VEGSFLVKFISR. Residues 508-530 traverse the membrane as a helical segment; that stretch reads FTQEIFSILISLIFIYETFSKLG. The Extracellular portion of the chain corresponds to 531–583; sequence KIFKAHPLVLNYEHLNDSLDNPFHPVVKEHIEYHEDGNKTVHEVIHERAYPNT. Residues Asn546 and Asn568 are each glycosylated (N-linked (GlcNAc...) asparagine). Residues 584-604 traverse the membrane as a helical segment; it reads ALLSMCLMFGCFFIAYFLRQF. At 605–615 the chain is on the cytoplasmic side; the sequence is KNGHFLPGPIR. Residues 616 to 636 traverse the membrane as a helical segment; it reads RMIGDFGVPIAIFFMIAVDIT. Residues 637 to 676 are Extracellular-facing; the sequence is IEDAYTQKLVVPKGLMVSNPNARGWFINPLGEKKPFPAWM. Residues 677–697 traverse the membrane as a helical segment; it reads MGACCVPALLVFILIFLESQI. Topologically, residues 698-713 are cytoplasmic; sequence TTLIVSKPERKMVKGS. A helical membrane pass occupies residues 714–732; that stretch reads GFHLDLLILVTMGGIASLF. Residues 733–750 traverse the membrane as a discontinuously helical segment; it reads GVPWLSAATVRSVTHANA. Over 751–769 the chain is Cytoplasmic; it reads LTVMSKGPKPEIEKVLEQR. Helical transmembrane passes span 770-790 and 791-809; these read ISGM…PILK and MIPM…ITSL. Topologically, residues 810–847 are cytoplasmic; that stretch reads SGIQMWDRMLLLIVPRKYYPADAYAQRVTTMKMHLFTL. The segment at residues 848–878 is an intramembrane region (discontinuously helical); it reads IQMVCLGALWMVKMSAFSLALPFVLILTIPL. Cys852 carries S-palmitoyl cysteine lipidation. The Cytoplasmic portion of the chain corresponds to 879–918; it reads RMAITGTLFTDKEMKCLDASDGKVKFEEEPGEDMYESPLP.

The protein belongs to the anion exchanger (TC 2.A.31) family. A dimer in solution, it spans the membrane asymmetrically and appears to be tetrameric.

The protein resides in the cell membrane. It carries out the reaction hydrogencarbonate(in) + chloride(out) = hydrogencarbonate(out) + chloride(in). Functionally, functions both as a transporter that mediates electroneutral anion exchange across the cell membrane and as a structural protein. Major integral membrane glycoprotein of the erythrocyte membrane; required for normal flexibility and stability of the erythrocyte membrane and for normal erythrocyte shape via the interactions of its cytoplasmic domain with cytoskeletal proteins, glycolytic enzymes, and hemoglobin. Functions as a transporter that mediates the 1:1 exchange of inorganic anions across the erythrocyte membrane. Mediates chloride-bicarbonate exchange in the kidney, and is required for normal acidification of the urine. The polypeptide is Band 3 anion exchange protein (slc4a1) (Oncorhynchus mykiss (Rainbow trout)).